Reading from the N-terminus, the 169-residue chain is 16S rRNA aminocarboxypropyltransferase (169 aa).

S-adenosyl-L-methionine is bound by residues Thr17, Leu67, Leu90, and Thr109.

This sequence belongs to the TDD superfamily. TSR3 family.

It is found in the cytoplasm. It catalyses the reaction an N(1)-methylpseudouridine in rRNA + S-adenosyl-L-methionine = N(1)-methyl-N(3)-[(3S)-3-amino-3-carboxypropyl]pseudouridine in rRNA + S-methyl-5'-thioadenosine + H(+). Its function is as follows. Aminocarboxypropyltransferase that catalyzes the aminocarboxypropyl transfer on pseudouridine corresponding to position 914 in M.jannaschii 16S rRNA. It constitutes the last step in biosynthesis of the hypermodified N1-methyl-N3-(3-amino-3-carboxypropyl) pseudouridine (m1acp3-Psi). In Methanothermobacter thermautotrophicus (strain ATCC 29096 / DSM 1053 / JCM 10044 / NBRC 100330 / Delta H) (Methanobacterium thermoautotrophicum), this protein is 16S rRNA aminocarboxypropyltransferase.